A 213-amino-acid chain; its full sequence is Motile sperm domain-containing protein 1 (213 aa).

Residues P16–F143 enclose the MSP domain. A run of 2 helical transmembrane segments spans residues S159 to G179 and L191 to L211. The Nuclear export signal motif lies at L205–M208.

Widely expressed. Shows highest expression in ribs, and slightly lower levels of expression in heart, kidney, muscle, thymus, calvariae and lung. Also detected at low levels in spleen and liver.

Its subcellular location is the endoplasmic reticulum membrane. The protein resides in the golgi apparatus membrane. Its function is as follows. Plays a role in differentiation and/or proliferation of mesenchymal stem cells. Proposed to be involved in epithelial-to-mesenchymal transition (EMT). However, another study suggests that it is not required for EMT or stem cell self-renewal and acts during later stages of differentiation. The sequence is that of Motile sperm domain-containing protein 1 (Mospd1) from Mus musculus (Mouse).